A 414-amino-acid polypeptide reads, in one-letter code: uncharacterized protein (414 aa).

The N-terminal stretch at 1–18 (MLKRLMLASAILPVVSFA) is a signal peptide.

This is an uncharacterized protein from Aquifex aeolicus (strain VF5).